The primary structure comprises 458 residues: Ribulose bisphosphate carboxylase (458 aa).

Asn-111 contacts substrate. The active-site Proton acceptor is the Lys-166. Substrate is bound at residue Lys-168. Residues Lys-191, Asp-193, and Glu-194 each coordinate Mg(2+). At Lys-191 the chain carries N6-carboxylysine. The active-site Proton acceptor is His-287. 3 residues coordinate substrate: Arg-288, His-321, and Ser-368.

Belongs to the RuBisCO large chain family. Type II subfamily. In terms of assembly, homodimer. Mg(2+) is required as a cofactor.

The catalysed reaction is 2 (2R)-3-phosphoglycerate + 2 H(+) = D-ribulose 1,5-bisphosphate + CO2 + H2O. The enzyme catalyses D-ribulose 1,5-bisphosphate + O2 = 2-phosphoglycolate + (2R)-3-phosphoglycerate + 2 H(+). Its function is as follows. RuBisCO catalyzes two reactions: the carboxylation of D-ribulose 1,5-bisphosphate, the primary event in carbon dioxide fixation, as well as the oxidative fragmentation of the pentose substrate. Both reactions occur simultaneously and in competition at the same active site. This chain is Ribulose bisphosphate carboxylase (cbbM), found in Rhodobacter capsulatus (Rhodopseudomonas capsulata).